The sequence spans 418 residues: Gamma-glutamyl phosphate reductase (418 aa).

This sequence belongs to the gamma-glutamyl phosphate reductase family.

Its subcellular location is the cytoplasm. It carries out the reaction L-glutamate 5-semialdehyde + phosphate + NADP(+) = L-glutamyl 5-phosphate + NADPH + H(+). Its pathway is amino-acid biosynthesis; L-proline biosynthesis; L-glutamate 5-semialdehyde from L-glutamate: step 2/2. Its function is as follows. Catalyzes the NADPH-dependent reduction of L-glutamate 5-phosphate into L-glutamate 5-semialdehyde and phosphate. The product spontaneously undergoes cyclization to form 1-pyrroline-5-carboxylate. The protein is Gamma-glutamyl phosphate reductase of Geobacter sp. (strain M21).